Reading from the N-terminus, the 1518-residue chain is Putative cellulose synthase 2 (1518 aa).

Residues M1 to V731 form a catalytic region. 3 helical membrane passes run P24–I44, I71–L91, and L105–F125. The interval Q144–V237 is catalytic subdomain A. D186 is an active-site residue. Substrate is bound by residues D233 and D235. A catalytic subdomain B region spans residues E314–M374. Residue D330 is part of the active site. A run of 5 helical transmembrane segments spans residues F404 to G424, I427 to V447, I465 to P485, I514 to F534, and F543 to V563. The PilZ domain maps to Q569–G668. Residues L732 to L1518 are cyclic di-GMP binding domain. The interval A765–G785 is disordered. Residues P768–G785 show a composition bias toward polar residues. Residues A1481–L1501 traverse the membrane as a helical segment.

The protein in the N-terminal section; belongs to the glycosyltransferase 2 family. It in the C-terminal section; belongs to the AcsB/BcsB family.

It localises to the cell inner membrane. It carries out the reaction [(1-&gt;4)-beta-D-glucosyl](n) + UDP-alpha-D-glucose = [(1-&gt;4)-beta-D-glucosyl](n+1) + UDP + H(+). It functions in the pathway glycan metabolism; bacterial cellulose biosynthesis. The chain is Putative cellulose synthase 2 (bcsABII-A) from Komagataeibacter xylinus (Gluconacetobacter xylinus).